A 119-amino-acid chain; its full sequence is Large ribosomal subunit protein uL18 (119 aa).

Belongs to the universal ribosomal protein uL18 family. Part of the 50S ribosomal subunit; part of the 5S rRNA/L5/L18/L25 subcomplex. Contacts the 5S and 23S rRNAs.

Functionally, this is one of the proteins that bind and probably mediate the attachment of the 5S RNA into the large ribosomal subunit, where it forms part of the central protuberance. This is Large ribosomal subunit protein uL18 from Legionella pneumophila (strain Paris).